We begin with the raw amino-acid sequence, 392 residues long: Phospho-N-acetylmuramoyl-pentapeptide-transferase (392 aa).

10 helical membrane-spanning segments follow: residues 28–48 (RALM…PFVI), 76–96 (TMGG…WFDL), 100–120 (FVWI…VDDW), 137–157 (YLWQ…SISE), 193–213 (ISYP…IVGS), 225–245 (GLAI…AYVT), 262–282 (SGEL…FLWF), 289–309 (VFMG…IAVI), 314–334 (IVLA…MLQV), and 369–389 (QVVV…LSTL).

It belongs to the glycosyltransferase 4 family. MraY subfamily. It depends on Mg(2+) as a cofactor.

It is found in the cell inner membrane. It catalyses the reaction UDP-N-acetyl-alpha-D-muramoyl-L-alanyl-gamma-D-glutamyl-meso-2,6-diaminopimeloyl-D-alanyl-D-alanine + di-trans,octa-cis-undecaprenyl phosphate = di-trans,octa-cis-undecaprenyl diphospho-N-acetyl-alpha-D-muramoyl-L-alanyl-D-glutamyl-meso-2,6-diaminopimeloyl-D-alanyl-D-alanine + UMP. The protein operates within cell wall biogenesis; peptidoglycan biosynthesis. Functionally, catalyzes the initial step of the lipid cycle reactions in the biosynthesis of the cell wall peptidoglycan: transfers peptidoglycan precursor phospho-MurNAc-pentapeptide from UDP-MurNAc-pentapeptide onto the lipid carrier undecaprenyl phosphate, yielding undecaprenyl-pyrophosphoryl-MurNAc-pentapeptide, known as lipid I. The protein is Phospho-N-acetylmuramoyl-pentapeptide-transferase of Polaromonas naphthalenivorans (strain CJ2).